The sequence spans 537 residues: Proline--tRNA ligase (537 aa).

The protein belongs to the class-II aminoacyl-tRNA synthetase family. ProS type 3 subfamily. As to quaternary structure, homodimer.

It localises to the cytoplasm. It carries out the reaction tRNA(Pro) + L-proline + ATP = L-prolyl-tRNA(Pro) + AMP + diphosphate. Functionally, catalyzes the attachment of proline to tRNA(Pro) in a two-step reaction: proline is first activated by ATP to form Pro-AMP and then transferred to the acceptor end of tRNA(Pro). The polypeptide is Proline--tRNA ligase (Nanoarchaeum equitans (strain Kin4-M)).